The following is a 286-amino-acid chain: Formamidopyrimidine-DNA glycosylase (286 aa).

The active-site Schiff-base intermediate with DNA is Pro2. Catalysis depends on Glu3, which acts as the Proton donor. Lys61 serves as the catalytic Proton donor; for beta-elimination activity. DNA-binding residues include His96, Arg117, and Lys160. Residues 246–280 (DAYGREGMPCRRCATPMRRRPWMNRSSYFCPKCQR) form an FPG-type zinc finger. The active-site Proton donor; for delta-elimination activity is Arg270.

It belongs to the FPG family. In terms of assembly, monomer. It depends on Zn(2+) as a cofactor.

It carries out the reaction Hydrolysis of DNA containing ring-opened 7-methylguanine residues, releasing 2,6-diamino-4-hydroxy-5-(N-methyl)formamidopyrimidine.. The catalysed reaction is 2'-deoxyribonucleotide-(2'-deoxyribose 5'-phosphate)-2'-deoxyribonucleotide-DNA = a 3'-end 2'-deoxyribonucleotide-(2,3-dehydro-2,3-deoxyribose 5'-phosphate)-DNA + a 5'-end 5'-phospho-2'-deoxyribonucleoside-DNA + H(+). Functionally, involved in base excision repair of DNA damaged by oxidation or by mutagenic agents. Acts as a DNA glycosylase that recognizes and removes damaged bases. Has a preference for oxidized purines, such as 7,8-dihydro-8-oxoguanine (8-oxoG). Has AP (apurinic/apyrimidinic) lyase activity and introduces nicks in the DNA strand. Cleaves the DNA backbone by beta-delta elimination to generate a single-strand break at the site of the removed base with both 3'- and 5'-phosphates. The protein is Formamidopyrimidine-DNA glycosylase (mutM) of Streptomyces coelicolor (strain ATCC BAA-471 / A3(2) / M145).